The primary structure comprises 523 residues: SWI/SNF and RSC complexes subunit arp9 (523 aa).

Positions 56 to 72 (INMEDPNVKTDETKVET) are enriched in basic and acidic residues. Disordered stretches follow at residues 56-92 (INME…KNMG) and 319-339 (QKER…NTDV). Polar residues predominate over residues 79-92 (QPSNSNVTEEKNMG). The segment covering 319 to 336 (QKEREKNGESEKDEKPDN) has biased composition (basic and acidic residues).

The protein belongs to the actin family. As to quaternary structure, component of the RSC complex composed of at least arp9, arp42, rsc1, rsc4, rsc7, rsc9, rsc58, sfh1, snf21, ssr1, ssr2, ssr3 and ssr4. The complex interacts with histone and histone variant components of centromeric chromatin. Component of the SWI/SNF global transcription activator complex composed of at least arp9, arp42, snf5, snf22, snf30, sbf59, sol1, ssr1, ssr2, ssr3, ssr4 and tfg3.

Its subcellular location is the cytoplasm. The protein localises to the nucleus. Functionally, component of the chromatin structure remodeling complex (RSC), which is involved in transcription regulation and nucleosome positioning. Controls particularly membrane and organelle development genes. Part of the SWI/SNF complex, an ATP-dependent chromatin remodeling complex, required for the positive and negative regulation of gene expression of a large number of genes. It changes chromatin structure by altering DNA-histone contacts within a nucleosome, leading eventually to a change in nucleosome position, thus facilitating or repressing binding of gene-specific transcription factors. In Schizosaccharomyces pombe (strain 972 / ATCC 24843) (Fission yeast), this protein is SWI/SNF and RSC complexes subunit arp9 (arp9).